Reading from the N-terminus, the 173-residue chain is Peptide deformylase (173 aa).

Fe cation contacts are provided by Cys-98 and His-140. Glu-141 is an active-site residue. His-144 provides a ligand contact to Fe cation.

This sequence belongs to the polypeptide deformylase family. Fe(2+) serves as cofactor.

It carries out the reaction N-terminal N-formyl-L-methionyl-[peptide] + H2O = N-terminal L-methionyl-[peptide] + formate. Its function is as follows. Removes the formyl group from the N-terminal Met of newly synthesized proteins. Requires at least a dipeptide for an efficient rate of reaction. N-terminal L-methionine is a prerequisite for activity but the enzyme has broad specificity at other positions. In Caulobacter sp. (strain K31), this protein is Peptide deformylase.